The sequence spans 249 residues: Probable aquaporin TIP-type (249 aa).

2 consecutive transmembrane segments (helical) span residues 22-42 and 56-76; these read AGLAEFISTFIFVFAGSGSGI and AGLISASIAHAFALFVAVSVG. Positions 85 to 87 match the NPA 1 motif; it reads NPA. A run of 3 helical transmembrane segments spans residues 103–123, 137–157, and 169–189; these read IVYIIAQLLGSIVCSALLVFV, VGVGPALVLEIVMTFGLVYTV, and IGIIAPIAIGFIVGANILVGG. The NPA 2 signature appears at 197-199; the sequence is NPA. A helical transmembrane segment spans residues 217–237; that stretch reads YWAGPLIGGGIAGLVYEVLFI.

It belongs to the MIP/aquaporin (TC 1.A.8) family. TIP (TC 1.A.8.10) subfamily. In terms of tissue distribution, expression is highest in root tips, with slightly lower levels of hybridizing mRNA in stems, and whole roots, and much lower levels in nodules and leaves.

Its subcellular location is the membrane. Its function is as follows. Aquaporins facilitate the transport of water and small neutral solutes across cell membranes. This is Probable aquaporin TIP-type (MCP1) from Medicago sativa (Alfalfa).